The sequence spans 546 residues: Light-independent protochlorophyllide reductase subunit B (546 aa).

D36 lines the [4Fe-4S] cluster pocket. Residue D287 is the Proton donor of the active site. 422–423 (GL) is a binding site for substrate. Residues 443–501 (PSHLSAHRPTGEAVGDAVGEPPAAPRDQAAPAATLDGSAAQSDPARTTPPGAPSWEDSA) are disordered.

This sequence belongs to the ChlB/BchB/BchZ family. As to quaternary structure, protochlorophyllide reductase is composed of three subunits; BchL, BchN and BchB. Forms a heterotetramer of two BchB and two BchN subunits. It depends on [4Fe-4S] cluster as a cofactor.

It carries out the reaction chlorophyllide a + oxidized 2[4Fe-4S]-[ferredoxin] + 2 ADP + 2 phosphate = protochlorophyllide a + reduced 2[4Fe-4S]-[ferredoxin] + 2 ATP + 2 H2O. It functions in the pathway porphyrin-containing compound metabolism; bacteriochlorophyll biosynthesis (light-independent). In terms of biological role, component of the dark-operative protochlorophyllide reductase (DPOR) that uses Mg-ATP and reduced ferredoxin to reduce ring D of protochlorophyllide (Pchlide) to form chlorophyllide a (Chlide). This reaction is light-independent. The NB-protein (BchN-BchB) is the catalytic component of the complex. The chain is Light-independent protochlorophyllide reductase subunit B from Rhodospirillum rubrum (strain ATCC 11170 / ATH 1.1.1 / DSM 467 / LMG 4362 / NCIMB 8255 / S1).